The following is a 210-amino-acid chain: ATP-dependent dethiobiotin synthetase BioD (210 aa).

13–18 (GIGKTV) provides a ligand contact to ATP. Residue Thr17 participates in Mg(2+) binding. Residue Lys33 is part of the active site. Residue Glu101 participates in Mg(2+) binding. Residues 101–104 (EGAG) and 185–187 (PWL) each bind ATP.

This sequence belongs to the dethiobiotin synthetase family. In terms of assembly, homodimer. The cofactor is Mg(2+).

It localises to the cytoplasm. The catalysed reaction is (7R,8S)-7,8-diammoniononanoate + CO2 + ATP = (4R,5S)-dethiobiotin + ADP + phosphate + 3 H(+). It participates in cofactor biosynthesis; biotin biosynthesis; biotin from 7,8-diaminononanoate: step 1/2. Functionally, catalyzes a mechanistically unusual reaction, the ATP-dependent insertion of CO2 between the N7 and N8 nitrogen atoms of 7,8-diaminopelargonic acid (DAPA, also called 7,8-diammoniononanoate) to form a ureido ring. This is ATP-dependent dethiobiotin synthetase BioD from Bradyrhizobium sp. (strain BTAi1 / ATCC BAA-1182).